The following is a 265-amino-acid chain: Homeobox protein engrailed-2-B (265 aa).

2 stretches are compositionally biased toward basic and acidic residues: residues 1-12 (MEENEQNNREVE) and 102-115 (GEKK…ETLK). 3 disordered regions span residues 1–38 (MEEN…QPHH), 60–138 (INHQ…SSKA), and 156–182 (DRPS…PRTA). Positions 122-136 (DHSLSSDSDSSQASS) are enriched in low complexity. Positions 176–235 (DKRPRTAFTAEQLQRLKAEFQTNRYLTEQRRQSLAQELGLNESQIKIWFQNKRAKIKKST) form a DNA-binding region, homeobox.

Belongs to the engrailed homeobox family.

The protein resides in the nucleus. This chain is Homeobox protein engrailed-2-B (en2-b), found in Xenopus laevis (African clawed frog).